Consider the following 175-residue polypeptide: B9 domain-containing protein 2 (175 aa).

Residues 2-118 (AEVHVIGQII…DCPTWRPLGS (117 aa)) form the C2 B9-type domain.

The protein belongs to the B9D family. In terms of assembly, part of the tectonic-like complex (also named B9 complex). Interacts with TUBG1.

Its subcellular location is the cytoplasm. It is found in the cytoskeleton. The protein localises to the cilium basal body. The protein resides in the cilium axoneme. It localises to the nucleus. Component of the tectonic-like complex, a complex localized at the transition zone of primary cilia and acting as a barrier that prevents diffusion of transmembrane proteins between the cilia and plasma membranes. The sequence is that of B9 domain-containing protein 2 (B9d2) from Rattus norvegicus (Rat).